A 337-amino-acid chain; its full sequence is Putative carbonic anhydrase-like protein 2 (337 aa).

The first 16 residues, 1 to 16 (MIPWLLTACIYPCVIG), serve as a signal peptide directing secretion. Residues 17–274 (PDFWGLLHGD…LNGRLVRTNI (258 aa)) form the Alpha-carbonic anhydrase domain. The active site involves tyrosine 140. Residue asparagine 188 is glycosylated (N-linked (GlcNAc...) asparagine). A substrate-binding site is contributed by 212–213 (TF).

The protein belongs to the alpha-carbonic anhydrase family.

The protein resides in the secreted. This chain is Putative carbonic anhydrase-like protein 2 (cah-2), found in Caenorhabditis elegans.